The sequence spans 512 residues: Cytochrome P450 76C2 (512 aa).

A helical transmembrane segment spans residues 3–23 (IIFEQALFPLFCFVLSFFIIF). C451 is a heme binding site.

This sequence belongs to the cytochrome P450 family. Heme serves as cofactor.

The protein localises to the membrane. The chain is Cytochrome P450 76C2 (CYP76C2) from Arabidopsis thaliana (Mouse-ear cress).